Consider the following 167-residue polypeptide: MANIEKKNNSELQEKLITVNRVSKTVKGGRIFSFTALTVVGNGEGRVGFGYGKAREVPAAIQKAMEKARRNMVTIPLVNKTLQHSLKGSHTGSNIFMKPASDGTGIIAGGAMRAVLEVAGIHNVLAKTYGSTNPINVVRATMNGLTNMKSPEMIAAKRNKLIEDILG.

The S5 DRBM domain occupies 12-75 (LQEKLITVNR…EKARRNMVTI (64 aa)).

The protein belongs to the universal ribosomal protein uS5 family. As to quaternary structure, part of the 30S ribosomal subunit. Contacts proteins S4 and S8.

In terms of biological role, with S4 and S12 plays an important role in translational accuracy. Functionally, located at the back of the 30S subunit body where it stabilizes the conformation of the head with respect to the body. This Buchnera aphidicola subsp. Schizaphis graminum (strain Sg) protein is Small ribosomal subunit protein uS5.